The following is a 164-amino-acid chain: Mediator of RNA polymerase II transcription subunit 21 (164 aa).

Positions 49–81 (APLPANQTQQGSTLGSNRQTVSPSTQAEAESNF) are disordered. The span at 53–81 (ANQTQQGSTLGSNRQTVSPSTQAEAESNF) shows a compositional bias: polar residues. A coiled-coil region spans residues 114-146 (ESQLKIIDDLSKELQSVEQEQVKKIQEKDKLLK).

This sequence belongs to the Mediator complex subunit 21 family. In terms of assembly, component of the Mediator complex.

The protein resides in the nucleus. Its function is as follows. Component of the Mediator complex, a coactivator involved in the regulated transcription of nearly all RNA polymerase II-dependent genes. Mediator functions as a bridge to convey information from gene-specific regulatory proteins to the basal RNA polymerase II transcription machinery. Mediator is recruited to promoters by direct interactions with regulatory proteins and serves as a scaffold for the assembly of a functional preinitiation complex with RNA polymerase II and the general transcription factors. The protein is Mediator of RNA polymerase II transcription subunit 21 (SRB7) of Scheffersomyces stipitis (strain ATCC 58785 / CBS 6054 / NBRC 10063 / NRRL Y-11545) (Yeast).